Consider the following 1164-residue polypeptide: Toxin subunit YenA1 (1164 aa).

The segment at Arg106–Asn131 is disordered. A compositionally biased stretch (low complexity) spans Thr118–Thr130.

In terms of assembly, semipurified toxin complex consists of at least YenA1, YenA2, YenB, YenC1, YenC2, Chi1 and Chi2. The Yen-TC:K9 subcomplex is about 26 nm tall and 22 nm in diameter with 5-fold symmetry and 5 copies of YenA1, YenA2, Chi1 and Chi2; the chitinase subunits may be solvent accessible on the exterior the complex. The Yen-TC:K9 subcomplex has no insecticidal activity. The native complex with additional YenB, YenC1 and YenC2 subunits is 16 nm taller and is insecticidal; the toxicity-conferring subunits are present at about 1 copy each.

The protein localises to the secreted. With respect to regulation, toxin complex is secreted when grown at 25 degrees Celsius or less; at higher temperatures the proteins are present intracellularly but not secreted. Its function is as follows. Part of an orally active toxin complex (TC) with strong insecticidal effects on larvae of the Coleoptera Costelytra zealandica, Acrossidius tasmania and Adoryphorus couloni and some Lepidoptera larvae. The TC has an endochitinase activity. This chain is Toxin subunit YenA1, found in Yersinia entomophaga.